The primary structure comprises 258 residues: Tryptophan synthase alpha chain (258 aa).

Active-site proton acceptor residues include Glu-52 and Asp-63.

This sequence belongs to the TrpA family. Tetramer of two alpha and two beta chains.

The enzyme catalyses (1S,2R)-1-C-(indol-3-yl)glycerol 3-phosphate + L-serine = D-glyceraldehyde 3-phosphate + L-tryptophan + H2O. It participates in amino-acid biosynthesis; L-tryptophan biosynthesis; L-tryptophan from chorismate: step 5/5. In terms of biological role, the alpha subunit is responsible for the aldol cleavage of indoleglycerol phosphate to indole and glyceraldehyde 3-phosphate. This chain is Tryptophan synthase alpha chain, found in Streptococcus pneumoniae (strain P1031).